Consider the following 96-residue polypeptide: MEQAPEDQGPQREPNNEWTLEILEELKREAVRHFPRPWLHNLGQHIYTTYGDTWEGLEAIIRILQQLLFIHFRIGCHHSRIGIIPQRRGRNGSSRS.

The segment at 1–42 is homooligomerization; sequence MEQAPEDQGPQREPNNEWTLEILEELKREAVRHFPRPWLHNL. Phosphoserine; by host occurs at positions 79, 94, and 96.

Belongs to the HIV-1 VPR protein family. Homooligomer, may form homodimer. Interacts with p6-gag region of the Pr55 Gag precursor protein through a (Leu-X-X)4 motif near the C-terminus of the P6gag protein. Interacts with host UNG. May interact with host RAD23A/HHR23A. Interacts with host VPRBP/DCAF1, leading to hijack the CUL4A-RBX1-DDB1-DCAF1/VPRBP complex, mediating ubiquitination of host proteins such as TERT and ZGPAT and arrest of the cell cycle in G2 phase. Phosphorylated on several residues by host. These phosphorylations regulate VPR activity for the nuclear import of the HIV-1 pre-integration complex.

The protein localises to the virion. It localises to the host nucleus. The protein resides in the host extracellular space. Its function is as follows. During virus replication, may deplete host UNG protein, and incude G2-M cell cycle arrest. Acts by targeting specific host proteins for degradation by the 26S proteasome, through association with the cellular CUL4A-DDB1 E3 ligase complex by direct interaction with host VPRPB/DCAF-1. Cell cycle arrest reportedly occurs within hours of infection and is not blocked by antiviral agents, suggesting that it is initiated by the VPR carried into the virion. Additionally, VPR induces apoptosis in a cell cycle dependent manner suggesting that these two effects are mechanistically linked. Detected in the serum and cerebrospinal fluid of AIDS patient, VPR may also induce cell death to bystander cells. During virus entry, plays a role in the transport of the viral pre-integration (PIC) complex to the host nucleus. This function is crucial for viral infection of non-dividing macrophages. May act directly at the nuclear pore complex, by binding nucleoporins phenylalanine-glycine (FG)-repeat regions. The protein is Protein Vpr of Human immunodeficiency virus type 1 group M subtype K (isolate 96CM-MP535) (HIV-1).